The following is a 294-amino-acid chain: Pyridoxal 5'-phosphate synthase subunit PdxS (294 aa).

Residue aspartate 24 participates in D-ribose 5-phosphate binding. The Schiff-base intermediate with D-ribose 5-phosphate role is filled by lysine 81. Glycine 153 is a D-ribose 5-phosphate binding site. Position 165 (arginine 165) interacts with D-glyceraldehyde 3-phosphate. D-ribose 5-phosphate-binding positions include glycine 214 and 235-236; that span reads GS.

The protein belongs to the PdxS/SNZ family. In the presence of PdxT, forms a dodecamer of heterodimers.

The enzyme catalyses aldehydo-D-ribose 5-phosphate + D-glyceraldehyde 3-phosphate + L-glutamine = pyridoxal 5'-phosphate + L-glutamate + phosphate + 3 H2O + H(+). It functions in the pathway cofactor biosynthesis; pyridoxal 5'-phosphate biosynthesis. Catalyzes the formation of pyridoxal 5'-phosphate from ribose 5-phosphate (RBP), glyceraldehyde 3-phosphate (G3P) and ammonia. The ammonia is provided by the PdxT subunit. Can also use ribulose 5-phosphate and dihydroxyacetone phosphate as substrates, resulting from enzyme-catalyzed isomerization of RBP and G3P, respectively. This is Pyridoxal 5'-phosphate synthase subunit PdxS from Bacillus velezensis (strain DSM 23117 / BGSC 10A6 / LMG 26770 / FZB42) (Bacillus amyloliquefaciens subsp. plantarum).